The following is a 360-amino-acid chain: D-alanine--D-alanine ligase (360 aa).

In terms of domain architecture, ATP-grasp spans 134-343; the sequence is KILAQRVGVP…YTELITRLIE (210 aa). 169 to 224 lines the ATP pocket; that stretch reads AEKLGRDMFVKPSNQGSSVGVSHVTNADEYAAALKEAFKYDDKVLVEETVPGTEVE. Residues aspartate 297, glutamate 310, and asparagine 312 each contribute to the Mg(2+) site.

Belongs to the D-alanine--D-alanine ligase family. Mg(2+) is required as a cofactor. It depends on Mn(2+) as a cofactor.

It localises to the cytoplasm. The enzyme catalyses 2 D-alanine + ATP = D-alanyl-D-alanine + ADP + phosphate + H(+). Its pathway is cell wall biogenesis; peptidoglycan biosynthesis. Cell wall formation. This chain is D-alanine--D-alanine ligase, found in Lactobacillus helveticus (strain DPC 4571).